A 494-amino-acid chain; its full sequence is Cysteine protease ATG4 (494 aa).

The APEAR signature appears at 102-105 (FVPI). Cys147 acts as the Nucleophile in catalysis. Position 307 is a phosphoserine (Ser307). Catalysis depends on residues Asp322 and His324. A disulfide bridge connects residues Cys338 and Cys394. Residues 424–427 (YVDI) carry the LIR motif. A Phosphoserine modification is found at Ser488.

The protein belongs to the peptidase C54 family. In terms of assembly, interacts with ATG8. Interacts with TUB1 and TUB2. Phosphorylation at Ser-307 by ATG1 inhibits autophagy: it takes place on autophagosome membranes and decreases its interaction with ATG8, thereby impairing deconjugation of PE-conjugated forms of ATG8. In terms of processing, formation of a disulfide bond between Cys-338 and Cys-394 leads to reduced autophagy. The disulfide bond is reduced by thioredoxin.

Its subcellular location is the cytoplasm. The protein resides in the nucleus. It is found in the preautophagosomal structure. The catalysed reaction is [protein]-C-terminal L-amino acid-glycyl-phosphatidylethanolamide + H2O = [protein]-C-terminal L-amino acid-glycine + a 1,2-diacyl-sn-glycero-3-phosphoethanolamine. In terms of biological role, cysteine protease that plays a key role in cytoplasm to vacuole transport (Cvt) and autophagy by mediating both proteolytic activation and delipidation of ATG8. Required for selective autophagic degradation of the nucleus (nucleophagy) as well as for mitophagy which contributes to regulate mitochondrial quantity and quality by eliminating the mitochondria to a basal level to fulfill cellular energy requirements and preventing excess ROS production. The protease activity is required for proteolytic activation of ATG8: cleaves the C-terminal amino acid of ATG8 to reveal a C-terminal glycine. ATG8 ubiquitin-like activity requires the exposure of the glycine at the C-terminus for its conjugation to phosphatidylethanolamine (PE) and its insertion to membranes, which is necessary for autophagy. The ATG8-PE conjugate mediates tethering between adjacent membranes and stimulates membrane hemifusion, leading to expansion of the autophagosomal membrane during autophagy. In addition to the protease activity, also catalyzes deconjugation of PE-conjugated forms of ATG8 during macroautophagy: ATG8 delipidation is required to release the protein from membranes, which facilitates multiple events during macroautophagy, and especially for efficient autophagosome biogenesis, the assembly of ATG9-containing tubulovesicular clusters into phagophores/autophagosomes, and for the disassembly of PAS-associated ATG components. ATG8 delipidation by ATG4 also recycles ATG8-PE generated on inappropriate membranes to maintain a reservoir of unlipidated ATG8 that is required for autophagosome formation at the PAS. The chain is Cysteine protease ATG4 (ATG4) from Saccharomyces cerevisiae (strain YJM789) (Baker's yeast).